The sequence spans 170 residues: E1B protein, small T-antigen (170 aa).

This sequence belongs to the adenoviridae E1B 19 kDa protein family.

In Canine adenovirus serotype 2 (CAdV-2), this protein is E1B protein, small T-antigen.